Reading from the N-terminus, the 445-residue chain is Cyclin-B1-2 (445 aa).

Belongs to the cyclin family. Cyclin AB subfamily. In terms of assembly, interacts with FZR2/CCS52A1, FZR1/CCS52A2 and FZR3/CCS52B. As to expression, expressed in roots, stems and flowers.

May induce mitotic cell division. The chain is Cyclin-B1-2 (CYCB1-2) from Arabidopsis thaliana (Mouse-ear cress).